Consider the following 285-residue polypeptide: Alpha-acetolactate decarboxylase (285 aa).

Residues 1-25 form the signal peptide; sequence MKKNIITSITSLALVAGLSLTAFAA.

This sequence belongs to the alpha-acetolactate decarboxylase family.

The catalysed reaction is (2S)-2-acetolactate + H(+) = (R)-acetoin + CO2. It participates in polyol metabolism; (R,R)-butane-2,3-diol biosynthesis; (R,R)-butane-2,3-diol from pyruvate: step 2/3. Its function is as follows. Converts acetolactate into acetoin, which can be excreted by the cells. This may be a mechanism for controlling the internal pH of cells in the stationary stage. The chain is Alpha-acetolactate decarboxylase (aldB) from Brevibacillus brevis (Bacillus brevis).